We begin with the raw amino-acid sequence, 90 residues long: Major envelope protein (90 aa).

A helical transmembrane segment spans residues 53-70 (AVSVVSWAVAAGLIGELI).

The protein localises to the virion membrane. Functionally, essential for membrane formation. In Pseudomonas savastanoi pv. phaseolicola (Pseudomonas syringae pv. phaseolicola), this protein is Major envelope protein (P9).